The following is a 149-amino-acid chain: Arginine repressor (149 aa).

This sequence belongs to the ArgR family.

It is found in the cytoplasm. Its pathway is amino-acid biosynthesis; L-arginine biosynthesis [regulation]. In terms of biological role, regulates arginine biosynthesis genes. In Exiguobacterium sp. (strain ATCC BAA-1283 / AT1b), this protein is Arginine repressor.